Here is a 400-residue protein sequence, read N- to C-terminus: uncharacterized protein (400 aa).

36–43 (GSINSGKT) is a binding site for ATP.

This sequence belongs to the archaeal ATPase family.

This is an uncharacterized protein from Methanocaldococcus jannaschii (strain ATCC 43067 / DSM 2661 / JAL-1 / JCM 10045 / NBRC 100440) (Methanococcus jannaschii).